A 711-amino-acid polypeptide reads, in one-letter code: Ribosomal RNA large subunit methyltransferase K/L (711 aa).

The region spanning 43–154 is the THUMP domain; it reads TLYRTLLWSR…RENLVISLDL (112 aa).

The protein belongs to the methyltransferase superfamily. RlmKL family.

The protein resides in the cytoplasm. It catalyses the reaction guanosine(2445) in 23S rRNA + S-adenosyl-L-methionine = N(2)-methylguanosine(2445) in 23S rRNA + S-adenosyl-L-homocysteine + H(+). It carries out the reaction guanosine(2069) in 23S rRNA + S-adenosyl-L-methionine = N(2)-methylguanosine(2069) in 23S rRNA + S-adenosyl-L-homocysteine + H(+). Functionally, specifically methylates the guanine in position 2445 (m2G2445) and the guanine in position 2069 (m7G2069) of 23S rRNA. The protein is Ribosomal RNA large subunit methyltransferase K/L of Haemophilus influenzae (strain PittEE).